Consider the following 671-residue polypeptide: Phospholipid:diacylglycerol acyltransferase 1 (671 aa).

The segment at 1 to 46 is disordered; the sequence is MPLIHRKKPTEKPSTPPSEEVVHDEDSQKKPHESSKSHHKKSNGGG. Topologically, residues 1–54 are cytoplasmic; the sequence is MPLIHRKKPTEKPSTPPSEEVVHDEDSQKKPHESSKSHHKKSNGGGKWSCIDSC. Positions 20–36 are enriched in basic and acidic residues; sequence EVVHDEDSQKKPHESSK. A helical transmembrane segment spans residues 55 to 75; the sequence is CWFIGCVCVTWWFLLFLYNAM. Residues 76–671 are Lumenal-facing; that stretch reads PASFPQYVTE…EWSERIDLKL (596 aa). N161 carries N-linked (GlcNAc...) asparagine glycosylation. Residue S254 is the Acyl-ester intermediate of the active site. Residues N381 and N434 are each glycosylated (N-linked (GlcNAc...) asparagine). Catalysis depends on charge relay system residues D573 and H626. N-linked (GlcNAc...) asparagine glycosylation occurs at N647.

This sequence belongs to the AB hydrolase superfamily. Lipase family. In terms of tissue distribution, ubiquitous. Highest expression in young developing seeds.

It is found in the membrane. It catalyses the reaction a glycerophospholipid + a 1,2-diacyl-sn-glycerol = a monoacylglycerophospholipid + a triacyl-sn-glycerol. The protein operates within glycerolipid metabolism; triacylglycerol biosynthesis. Triacylglycerol formation by an acyl-CoA independent pathway. The enzyme preferentially transfers acyl groups from the sn-2 position of a phospholipid to diacylglycerol, thus forming an sn-1-lysophospholipid. Involved in epoxy and hydroxy fatty acid accumulation in seeds. Has complementary functions with DAG1 that are essential for triacylglycerol synthesis and normal development of both seeds and pollen. The sequence is that of Phospholipid:diacylglycerol acyltransferase 1 (PDAT1) from Arabidopsis thaliana (Mouse-ear cress).